A 446-amino-acid chain; its full sequence is D(1A) dopamine receptor (446 aa).

Residues 1-22 (MPLNDTTMDRRGLVVERDFSFR) are Extracellular-facing. An N-linked (GlcNAc...) asparagine glycan is attached at asparagine 4. A helical membrane pass occupies residues 23–48 (ILTACFLSLLILSTLLGNTLVCAAVI). At 49–59 (RFRHLRSKVTN) the chain is on the cytoplasmic side. A helical membrane pass occupies residues 60 to 86 (FFVISLAVSDLLVAVLVMPWKAVAEIA). Topologically, residues 87–95 (GFWPFGSFC) are extracellular. Residues cysteine 95 and cysteine 185 are joined by a disulfide bond. The helical transmembrane segment at 96 to 118 (NIWVAFDIMCSTASILNLCVISV) threads the bilayer. Residues 119 to 137 (DRYWAISSPFRYERKMTPK) lie on the Cytoplasmic side of the membrane. The chain crosses the membrane as a helical span at residues 138–162 (AAFILISVAWTLSVLISFIPVQLNW). The Extracellular portion of the chain corresponds to 163–191 (HKARPLSSPDGNVSSQDETMDNCDSSLSR). Residues 192-217 (TYAISSSLISFYIPVAIMIVTYTRIY) traverse the membrane as a helical segment. Residues 218–271 (RIAQKQIRRISALERAAVHAKNCQNTTGNGANVECSQPESSFKMSFKRETKVLK) are Cytoplasmic-facing. The helical transmembrane segment at 272–298 (TLSVIMGVFVCCWLPFFILNCMVPFCE) threads the bilayer. Over 299–315 (SDLPSGETKPFCIDSIT) the chain is Extracellular. Residues 316-340 (FDVFVWFGWANSSLNPIIYAFNADF) form a helical membrane-spanning segment. Residues 341 to 446 (RKAFSTLLGC…PITQNGQHKT (106 aa)) are Cytoplasmic-facing. S-palmitoyl cysteine attachment occurs at residues cysteine 350 and cysteine 354.

The protein belongs to the G-protein coupled receptor 1 family. As to quaternary structure, interacts with DNAJC14 via its C-terminus.

It localises to the cell membrane. The protein resides in the endoplasmic reticulum membrane. The protein localises to the cell projection. Its subcellular location is the cilium membrane. It is found in the dendrite. It localises to the dendritic spine. Its function is as follows. This is one of the five types (D1 to D5) of receptors for dopamine. The activity of this receptor is mediated by G proteins which activate adenylyl cyclase. This is D(1A) dopamine receptor (DRD1) from Didelphis virginiana (North American opossum).